The chain runs to 452 residues: tRNA modification GTPase MnmE (452 aa).

Arginine 21, glutamate 78, and lysine 118 together coordinate (6S)-5-formyl-5,6,7,8-tetrahydrofolate. The TrmE-type G domain occupies 214-375 (GMKVVIAGRP…LREHLKQAMG (162 aa)). K(+) is bound at residue asparagine 224. GTP-binding positions include 224–229 (NAGKSS), 243–249 (TDIAGTT), and 268–271 (DTAG). Serine 228 is a Mg(2+) binding site. Residues threonine 243, isoleucine 245, and threonine 248 each coordinate K(+). Threonine 249 contacts Mg(2+). Lysine 452 provides a ligand contact to (6S)-5-formyl-5,6,7,8-tetrahydrofolate.

It belongs to the TRAFAC class TrmE-Era-EngA-EngB-Septin-like GTPase superfamily. TrmE GTPase family. As to quaternary structure, homodimer. Heterotetramer of two MnmE and two MnmG subunits. It depends on K(+) as a cofactor.

Its subcellular location is the cytoplasm. Its function is as follows. Exhibits a very high intrinsic GTPase hydrolysis rate. Involved in the addition of a carboxymethylaminomethyl (cmnm) group at the wobble position (U34) of certain tRNAs, forming tRNA-cmnm(5)s(2)U34. This is tRNA modification GTPase MnmE from Haemophilus influenzae (strain ATCC 51907 / DSM 11121 / KW20 / Rd).